The chain runs to 88 residues: Large ribosomal subunit protein bL31B (88 aa).

Belongs to the bacterial ribosomal protein bL31 family. Type B subfamily. In terms of assembly, part of the 50S ribosomal subunit.

The protein is Large ribosomal subunit protein bL31B of Bordetella pertussis (strain Tohama I / ATCC BAA-589 / NCTC 13251).